A 492-amino-acid polypeptide reads, in one-letter code: N-succinylglutamate 5-semialdehyde dehydrogenase (492 aa).

220–225 (GSASTG) is an NAD(+) binding site. Residues Glu243 and Cys277 contribute to the active site.

The protein belongs to the aldehyde dehydrogenase family. AstD subfamily.

The enzyme catalyses N-succinyl-L-glutamate 5-semialdehyde + NAD(+) + H2O = N-succinyl-L-glutamate + NADH + 2 H(+). The protein operates within amino-acid degradation; L-arginine degradation via AST pathway; L-glutamate and succinate from L-arginine: step 4/5. Its function is as follows. Catalyzes the NAD-dependent reduction of succinylglutamate semialdehyde into succinylglutamate. The protein is N-succinylglutamate 5-semialdehyde dehydrogenase of Salmonella enteritidis PT4 (strain P125109).